The following is a 498-amino-acid chain: Glycerol kinase (498 aa).

ADP is bound at residue Thr12. 3 residues coordinate ATP: Thr12, Thr13, and Ser14. Residue Thr12 participates in sn-glycerol 3-phosphate binding. Arg16 provides a ligand contact to ADP. Arg82, Glu83, and Tyr134 together coordinate sn-glycerol 3-phosphate. Positions 82, 83, and 134 each coordinate glycerol. His230 bears the Phosphohistidine; by HPr mark. Sn-glycerol 3-phosphate is bound at residue Asp244. Glycerol is bound by residues Asp244 and Gln245. The ADP site is built by Thr266 and Gly309. Positions 266, 309, 313, and 410 each coordinate ATP. The ADP site is built by Gly410 and Asn414.

Belongs to the FGGY kinase family. As to quaternary structure, homotetramer and homodimer (in equilibrium). Post-translationally, the phosphoenolpyruvate-dependent sugar phosphotransferase system (PTS), including enzyme I, and histidine-containing protein (HPr) are required for the phosphorylation, which leads to the activation of the enzyme.

It catalyses the reaction glycerol + ATP = sn-glycerol 3-phosphate + ADP + H(+). Its pathway is polyol metabolism; glycerol degradation via glycerol kinase pathway; sn-glycerol 3-phosphate from glycerol: step 1/1. Activated by phosphorylation and inhibited by fructose 1,6-bisphosphate (FBP). Functionally, key enzyme in the regulation of glycerol uptake and metabolism. Catalyzes the phosphorylation of glycerol to yield sn-glycerol 3-phosphate. This chain is Glycerol kinase, found in Staphylococcus aureus (strain Mu50 / ATCC 700699).